A 373-amino-acid chain; its full sequence is Chaperone protein DnaJ (373 aa).

The region spanning 5-71 is the J domain; it reads DYYEILGVSR…EKRAMYDKFG (67 aa). The CR-type zinc finger occupies 144-226; the sequence is GVKIPLEYDR…CGGTGRIRKR (83 aa). The Zn(2+) site is built by C157, C160, C174, C177, C200, C203, C214, and C217. CXXCXGXG motif repeat units lie at residues 157 to 164, 174 to 181, 200 to 207, and 214 to 221; these read CEHCHGEG, CPKCHGTG, CNQCGGTG, and CRVCGGTG.

It belongs to the DnaJ family. As to quaternary structure, homodimer. The cofactor is Zn(2+).

Its subcellular location is the cytoplasm. In terms of biological role, participates actively in the response to hyperosmotic and heat shock by preventing the aggregation of stress-denatured proteins and by disaggregating proteins, also in an autonomous, DnaK-independent fashion. Unfolded proteins bind initially to DnaJ; upon interaction with the DnaJ-bound protein, DnaK hydrolyzes its bound ATP, resulting in the formation of a stable complex. GrpE releases ADP from DnaK; ATP binding to DnaK triggers the release of the substrate protein, thus completing the reaction cycle. Several rounds of ATP-dependent interactions between DnaJ, DnaK and GrpE are required for fully efficient folding. Also involved, together with DnaK and GrpE, in the DNA replication of plasmids through activation of initiation proteins. In Thermosipho melanesiensis (strain DSM 12029 / CIP 104789 / BI429), this protein is Chaperone protein DnaJ.